The sequence spans 197 residues: Ribosome maturation factor RimM (197 aa).

Residues 99–174 (EDEFYQVDLI…LVVEPVAAGL (76 aa)) enclose the PRC barrel domain.

The protein belongs to the RimM family. As to quaternary structure, binds ribosomal protein uS19.

It localises to the cytoplasm. Its function is as follows. An accessory protein needed during the final step in the assembly of 30S ribosomal subunit, possibly for assembly of the head region. Essential for efficient processing of 16S rRNA. May be needed both before and after RbfA during the maturation of 16S rRNA. It has affinity for free ribosomal 30S subunits but not for 70S ribosomes. This Bartonella quintana (strain Toulouse) (Rochalimaea quintana) protein is Ribosome maturation factor RimM.